We begin with the raw amino-acid sequence, 414 residues long: WW domain-containing oxidoreductase (414 aa).

The disordered stretch occupies residues Met-1–Glu-24. The residue at position 12 (Thr-12) is a Phosphothreonine. Ser-14 carries the phosphoserine modification. The WW 1 domain occupies Asp-16 to Thr-49. Phosphotyrosine is present on Tyr-33. Positions Gly-50–Val-55 match the Nuclear localization signal motif. The 34-residue stretch at Gly-57–Leu-90 folds into the WW 2 domain. Residues Lys-125–Gly-414 form an interaction with MAPT region. Gly-131–Gly-137 serves as a coordination point for NADP(+). Positions Cys-209–Gly-273 are mediates targeting to the mitochondria. Ser-260 is a binding site for substrate. A Phosphotyrosine; by TNK2 modification is found at Tyr-287. The active-site Proton acceptor is the Tyr-293.

Belongs to the short-chain dehydrogenases/reductases (SDR) family. Interacts with TP53, p73/TP73 and MAPK8. Interacts with MAPT/TAU, RUNX2 and HYAL2. Forms a ternary complex with TP53 and MDM2. Interacts with ERBB4, LITAF and WBP1. Interacts with DVL1, DVL2 and DVL3. May interact with FAM189B and SCOTIN. Interacts with TNK2. Interacts with TMEM207. Interacts (via WW domain) with VOPP1. In terms of processing, phosphorylated upon genotoxic stress. Phosphorylation of Tyr-33 regulates interaction with TP53, TP73 and MAPK8. May also regulate proapoptotic activity. Phosphorylation by TNK2 is associated with polyubiquitination and degradation. Ubiquitinated when phosphorylated by TNK2, leading to its degradation.

Its subcellular location is the cytoplasm. It localises to the nucleus. It is found in the mitochondrion. The protein resides in the golgi apparatus. The protein localises to the lysosome. In terms of biological role, putative oxidoreductase. Acts as a tumor suppressor and plays a role in apoptosis. May function synergistically with p53/TP53 to control genotoxic stress-induced cell death. Plays a role in TGFB1 signaling and TGFB1-mediated cell death. May also play a role in tumor necrosis factor (TNF)-mediated cell death. Required for normal bone development. Inhibits Wnt signaling, probably by sequestering DVL2 in the cytoplasm. This chain is WW domain-containing oxidoreductase (WWOX), found in Pongo abelii (Sumatran orangutan).